A 301-amino-acid chain; its full sequence is Inactive C-alpha-formylglycine-generating enzyme 2 (301 aa).

Positions methionine 1–glycine 25 are cleaved as a signal peptide. A disulfide bridge links cysteine 156 with cysteine 290. N-linked (GlcNAc...) asparagine glycosylation is present at asparagine 191. Positions 194, 195, 208, 210, 229, 232, 234, and 236 each coordinate Ca(2+). A compositionally biased stretch (polar residues) spans arginine 274–aspartate 284. Positions arginine 274–leucine 301 are disordered. The Non-canonical ER retention motif motif lies at proline 298 to leucine 301.

It belongs to the sulfatase-modifying factor family. Homodimer and heterodimer with SUMF1.

The protein localises to the endoplasmic reticulum lumen. In terms of biological role, lacks formylglycine generating activity and is unable to convert newly synthesized inactive sulfatases to their active form. Inhibits the activation of sulfatases by SUMF1. The sequence is that of Inactive C-alpha-formylglycine-generating enzyme 2 from Bos taurus (Bovine).